A 125-amino-acid chain; its full sequence is Immunoglobulin heavy variable 4-39 (125 aa).

Positions 1-26 are cleaved as a signal peptide; sequence MDLMCKKMKHLWFFLLLVAAPRWVLS. Residues 27-51 form a framework-1 region; sequence QLQLQESGPGLVKPSETLSLTCTVS. Positions 27-125 constitute an Ig-like domain; it reads QLQLQESGPG…ADTAVYYCAR (99 aa). Cysteine 48 and cysteine 123 are joined by a disulfide. Residues 52–61 are complementarity-determining-1; that stretch reads GGSISSSSYY. A framework-2 region spans residues 62 to 78; that stretch reads WGWIRQPPGKGLEWIGS. The interval 79–85 is complementarity-determining-2; that stretch reads IYYSGST. The interval 86–123 is framework-3; that stretch reads YYNPSLKSRVTISVDTSKNQFSLKLSSVTAADTAVYYC. Positions 124-125 are complementarity-determining-3; it reads AR.

As to quaternary structure, immunoglobulins are composed of two identical heavy chains and two identical light chains; disulfide-linked.

The protein resides in the secreted. The protein localises to the cell membrane. V region of the variable domain of immunoglobulin heavy chains that participates in the antigen recognition. Immunoglobulins, also known as antibodies, are membrane-bound or secreted glycoproteins produced by B lymphocytes. In the recognition phase of humoral immunity, the membrane-bound immunoglobulins serve as receptors which, upon binding of a specific antigen, trigger the clonal expansion and differentiation of B lymphocytes into immunoglobulins-secreting plasma cells. Secreted immunoglobulins mediate the effector phase of humoral immunity, which results in the elimination of bound antigens. The antigen binding site is formed by the variable domain of one heavy chain, together with that of its associated light chain. Thus, each immunoglobulin has two antigen binding sites with remarkable affinity for a particular antigen. The variable domains are assembled by a process called V-(D)-J rearrangement and can then be subjected to somatic hypermutations which, after exposure to antigen and selection, allow affinity maturation for a particular antigen. This is Immunoglobulin heavy variable 4-39 from Homo sapiens (Human).